Here is a 731-residue protein sequence, read N- to C-terminus: MMQAQESLTLEDVAVDFTWEEWQFLSPAQKDLYRDVMLENYSNLVAVGYQASKPDALSKLERGEETCTTEDEIYSRICSEIRKIDDPLQHHLQNQSIQKSVKQCHEQNMFGNIVNQNKGHFLLKQDCDTFDLHEKPLKSNLSFENQKRSSGLKNSAEFNRDGKSLFHANHKQFYTEMKFPAIAKPINKSQFIKQQRTHNIENAHVCSECGKAFLKLSQFIDHQRVHTGEKPHVCSMCGKAFSRKSRLMDHQRTHTELKHYECTECDKTFLKKSQLNIHQKTHMGGKPYTCSQCGKAFIKKCRLIYHQRTHTGEKPHGCSVCGKAFSTKFSLTTHQKTHTGEKPYICSECGKGFIEKRRLTAHHRTHTGEKPFICNKCGKGFTLKNSLITHQQTHTGEKLYTCSECGKGFSMKHCLMVHQRTHTGEKPYKCNECGKGFALKSPLIRHQRTHTGEKPYVCTECRKGFTMKSDLIVHQRTHTAEKPYICNDCGKGFTVKSRLIVHQRTHTGEKPYVCGECGKGFPAKIRLMGHQRTHTGEKPYICNECGKGFTEKSHLNVHRRTHTGEKPYVCSECGKGLTGKSMLIAHQRTHTGEKPYICNECGKGFTMKSTLSIHQQTHTGEKPYKCNECDKTFRKKTCLIQHQRFHTGKTSFACTECGKFSLRKNDLITHQRIHTGEKPYKCSDCGKAFTTKSGLNVHQRKHTGERPYGCSDCGKAFAHLSILVKHRRIHR.

Residues 8 to 79 enclose the KRAB domain; sequence LTLEDVAVDF…EDEIYSRICS (72 aa). 19 C2H2-type zinc fingers span residues 204–226, 232–254, 260–282, 288–310, 316–338, 344–366, 372–394, 400–422, 428–450, 456–478, 484–506, 512–534, 540–562, 568–590, 596–618, 624–646, 652–674, 680–702, and 708–730; these read HVCSECGKAFLKLSQFIDHQRVH, HVCSMCGKAFSRKSRLMDHQRTH, YECTECDKTFLKKSQLNIHQKTH, YTCSQCGKAFIKKCRLIYHQRTH, HGCSVCGKAFSTKFSLTTHQKTH, YICSECGKGFIEKRRLTAHHRTH, FICNKCGKGFTLKNSLITHQQTH, YTCSECGKGFSMKHCLMVHQRTH, YKCNECGKGFALKSPLIRHQRTH, YVCTECRKGFTMKSDLIVHQRTH, YICNDCGKGFTVKSRLIVHQRTH, YVCGECGKGFPAKIRLMGHQRTH, YICNECGKGFTEKSHLNVHRRTH, YVCSECGKGLTGKSMLIAHQRTH, YICNECGKGFTMKSTLSIHQQTH, YKCNECDKTFRKKTCLIQHQRFH, FACTECGKFSLRKNDLITHQRIH, YKCSDCGKAFTTKSGLNVHQRKH, and YGCSDCGKAFAHLSILVKHRRIH.

It belongs to the krueppel C2H2-type zinc-finger protein family.

The protein resides in the nucleus. Functionally, may be involved in transcriptional regulation. The polypeptide is Zinc finger protein 615 (ZNF615) (Homo sapiens (Human)).